The sequence spans 456 residues: Myricetin 3-O-rhamnosyltransferase UGT77B2 (456 aa).

The Proton acceptor role is filled by His19. His19 is an an anthocyanidin binding site. Asp116 functions as the Charge relay in the catalytic mechanism. His147 provides a ligand contact to an anthocyanidin. UDP-beta-L-rhamnose is bound by residues Thr279, Ala334, His351, Asn355, and Glu359. Ala374 is an an anthocyanidin binding site.

The protein belongs to the UDP-glycosyltransferase family. In terms of tissue distribution, expressed in young cromes.

It carries out the reaction myricetin + UDP-beta-L-rhamnose = myricetin 3-O-alpha-L-rhamnoside + UDP + H(+). It participates in flavonoid metabolism. In terms of biological role, rhamnosyltransferase involved in montbretin A (MbA) biosynthesis. Catalyzes the 3-O rhamnosylation of myricetin to produce myricetin 3-O-alpha-L-rhamnoside (MR), a precursor of MbA. MbA is a potent inhibitor of human pancreatic alpha-amylase and is being developed as drug candidate to treat type-2 diabetes. In vitro, is able to transfer UDP-glucose and UDP-xylose with 50-fold less efficiency compared with UDP-rhamnose. In vitro, can use kaempferol or quercetin as substrates, although these two flavonols may not be physiological substrates in vivo. The sequence is that of Myricetin 3-O-rhamnosyltransferase UGT77B2 from Crocosmia x crocosmiiflora (Montbretia).